A 177-amino-acid chain; its full sequence is Large ribosomal subunit protein uL6 (177 aa).

The protein belongs to the universal ribosomal protein uL6 family. As to quaternary structure, part of the 50S ribosomal subunit.

Its function is as follows. This protein binds to the 23S rRNA, and is important in its secondary structure. It is located near the subunit interface in the base of the L7/L12 stalk, and near the tRNA binding site of the peptidyltransferase center. The chain is Large ribosomal subunit protein uL6 from Saccharophagus degradans (strain 2-40 / ATCC 43961 / DSM 17024).